The primary structure comprises 355 residues: WAT1-related protein At1g25270 (355 aa).

10 consecutive transmembrane segments (helical) span residues 4–24 (VVAM…FKIT), 33–53 (VLVA…ALIF), 65–85 (LLLL…ILYL), 94–114 (TFSA…GLVF), 134–154 (LLGA…IHIW), 175–195 (VSIL…LWLL), 207–227 (LYWN…IIAL), 244–264 (LLAT…LVAW), 272–292 (LFVT…GSFA), and 297–317 (LHLG…LVVW). The EamA 1 domain maps to 12–142 (FIFAGMFILF…TLLGACGALV (131 aa)). In terms of domain architecture, EamA 2 spans 210–316 (NTSLMNGVGS…IMVGGVYLVV (107 aa)).

The protein belongs to the drug/metabolite transporter (DMT) superfamily. Plant drug/metabolite exporter (P-DME) (TC 2.A.7.4) family.

It is found in the membrane. This chain is WAT1-related protein At1g25270, found in Arabidopsis thaliana (Mouse-ear cress).